A 347-amino-acid chain; its full sequence is Isocitrate dehydrogenase [NAD] subunit alpha, mitochondrial (347 aa).

The N-terminal 8 residues, 1–8, are a transit peptide targeting the mitochondrion; that stretch reads QKQVTRGF. An NAD(+)-binding site is contributed by 14–42; the sequence is TVTLIPGDGIGPEISAAVMKIFDAAKAPI. Residue lysine 58 is modified to N6-succinyllysine. Threonine 82 carries the post-translational modification Phosphothreonine. Substrate contacts are provided by arginine 96, arginine 106, and arginine 127. An N6-acetyllysine modification is found at lysine 204. Mg(2+) contacts are provided by aspartate 214, aspartate 238, and aspartate 242. Lysine 324 carries the post-translational modification N6-acetyllysine; alternate. An N6-succinyllysine; alternate modification is found at lysine 324. Lysine 331 bears the N6-succinyllysine mark.

The protein belongs to the isocitrate and isopropylmalate dehydrogenases family. In terms of assembly, heterooligomer of subunits alpha (IDH3A), beta (IDH3B), and gamma (IDH3G) in the apparent ratio of 2:1:1. The heterodimer containing one IDH3A and one IDH3B subunit and the heterodimer containing one IDH3A and one IDH3G subunit assemble into a heterotetramer (which contains two subunits of IDH3A, one of IDH3B and one of IDH3G) and further into the heterooctamer. Mg(2+) is required as a cofactor. Requires Mn(2+) as cofactor.

It localises to the mitochondrion. It catalyses the reaction D-threo-isocitrate + NAD(+) = 2-oxoglutarate + CO2 + NADH. The heterotetramer and the heterodimer composed of IDH3A and IDH3G subunits can be allosterically activated by citrate (CIT) or/and ADP, and the two activators can act independently or synergistically. The heterodimer composed of IDH3A and IDH3B subunits cannot be allosterically regulated and the allosteric regulation of the heterotetramer is through the IDH3G subunit and not the IDH3B subunit. The IDH3G subunit contains the allosteric site which consists of a CIT-binding site and an ADP-binding site, and the binding of CIT and ADP causes conformational changes at the allosteric site which are transmitted to the active site in the catalytic subunit (IDH3A) through a cascade of conformational changes at the heterodimer interface, leading to stabilization of the isocitrate-binding at the active site and thus activation of the enzyme. ATP can activate the heterotetramer and the heterodimer composed of IDH3A and IDH3G subunits at low concentrations but inhibits their activities at high concentrations, whereas ATP exhibits only inhibitory effect on the heterodimer composed of IDH3A and IDH3B subunits. Its function is as follows. Catalytic subunit of the enzyme which catalyzes the decarboxylation of isocitrate (ICT) into alpha-ketoglutarate. The heterodimer composed of the alpha (IDH3A) and beta (IDH3B) subunits and the heterodimer composed of the alpha (IDH3A) and gamma (IDH3G) subunits, have considerable basal activity but the full activity of the heterotetramer (containing two subunits of IDH3A, one of IDH3B and one of IDH3G) requires the assembly and cooperative function of both heterodimers. The sequence is that of Isocitrate dehydrogenase [NAD] subunit alpha, mitochondrial (IDH3A) from Macaca fascicularis (Crab-eating macaque).